The sequence spans 691 residues: Elongation factor G (691 aa).

A tr-type G domain is found at E8–I282. Residues A17–T24, D81–H85, and N135–D138 each bind GTP.

The protein belongs to the TRAFAC class translation factor GTPase superfamily. Classic translation factor GTPase family. EF-G/EF-2 subfamily.

It is found in the cytoplasm. In terms of biological role, catalyzes the GTP-dependent ribosomal translocation step during translation elongation. During this step, the ribosome changes from the pre-translocational (PRE) to the post-translocational (POST) state as the newly formed A-site-bound peptidyl-tRNA and P-site-bound deacylated tRNA move to the P and E sites, respectively. Catalyzes the coordinated movement of the two tRNA molecules, the mRNA and conformational changes in the ribosome. This chain is Elongation factor G, found in Prochlorococcus marinus subsp. pastoris (strain CCMP1986 / NIES-2087 / MED4).